Consider the following 307-residue polypeptide: 2-methoxy-6-polyprenyl-1,4-benzoquinol methylase, mitochondrial (307 aa).

The N-terminal 19 residues, 1–19, are a transit peptide targeting the mitochondrion; that stretch reads MLISSRIVRSSLVNVPLRL. Residues serine 122, aspartate 148, 179–180, and serine 197 contribute to the S-adenosyl-L-methionine site; that span reads NG.

This sequence belongs to the class I-like SAM-binding methyltransferase superfamily. MenG/UbiE family. As to quaternary structure, component of a multi-subunit COQ enzyme complex, composed of at least COQ3, COQ4, COQ5, COQ6, COQ7 and COQ9. Interacts with COQ3.

Its subcellular location is the mitochondrion inner membrane. The catalysed reaction is 2-methoxy-6-(all-trans-hexaprenyl)benzene-1,4-diol + S-adenosyl-L-methionine = 5-methoxy-2-methyl-3-(all-trans-hexaprenyl)benzene-1,4-diol + S-adenosyl-L-homocysteine + H(+). It participates in cofactor biosynthesis; ubiquinone biosynthesis. Its function is as follows. Methyltransferase required for the conversion of 2-hexaprenyl-6-methoxy-1,4-benzoquinol (DDMQH2) to 2-hexaprenyl-3-methyl-6-methoxy-1,4-benzoquinol (DMQH2). The sequence is that of 2-methoxy-6-polyprenyl-1,4-benzoquinol methylase, mitochondrial from Saccharomyces cerevisiae (strain ATCC 204508 / S288c) (Baker's yeast).